Here is a 174-residue protein sequence, read N- to C-terminus: NADH-ubiquinone oxidoreductase chain 6 (174 aa).

5 consecutive transmembrane segments (helical) span residues 1–21, 24–44, 46–66, 86–106, and 151–171; these read MTYV…GFSS, SPIY…GIVL, FGGS…MLVV, VMIL…VVYM, and WLMV…IEIT.

It belongs to the complex I subunit 6 family. In terms of assembly, core subunit of respiratory chain NADH dehydrogenase (Complex I) which is composed of 45 different subunits.

Its subcellular location is the mitochondrion inner membrane. It catalyses the reaction a ubiquinone + NADH + 5 H(+)(in) = a ubiquinol + NAD(+) + 4 H(+)(out). Functionally, core subunit of the mitochondrial membrane respiratory chain NADH dehydrogenase (Complex I) which catalyzes electron transfer from NADH through the respiratory chain, using ubiquinone as an electron acceptor. Essential for the catalytic activity and assembly of complex I. This Oryctolagus cuniculus (Rabbit) protein is NADH-ubiquinone oxidoreductase chain 6 (MT-ND6).